We begin with the raw amino-acid sequence, 147 residues long: uncharacterized protein (147 aa).

Residues 51–72 (VTSSMSVMNDSEECPLINGPSM) are disordered.

This is an uncharacterized protein from Gallid herpesvirus 2 (strain GA) (GaHV-2).